We begin with the raw amino-acid sequence, 390 residues long: Putative 2-isopropylmalate synthase (390 aa).

The region spanning 5-267 (IIIFDTTLRD…KTNIKYQEIY (263 aa)) is the Pyruvate carboxyltransferase domain. 4 residues coordinate Mn(2+): Asp-14, His-202, His-204, and Asn-238.

Belongs to the alpha-IPM synthase/homocitrate synthase family. LeuA type 1 subfamily. Homodimer. Mn(2+) is required as a cofactor.

It is found in the cytoplasm. The enzyme catalyses 3-methyl-2-oxobutanoate + acetyl-CoA + H2O = (2S)-2-isopropylmalate + CoA + H(+). The protein operates within amino-acid biosynthesis; L-leucine biosynthesis; L-leucine from 3-methyl-2-oxobutanoate: step 1/4. Catalyzes the condensation of the acetyl group of acetyl-CoA with 3-methyl-2-oxobutanoate (2-ketoisovalerate) to form 3-carboxy-3-hydroxy-4-methylpentanoate (2-isopropylmalate). The protein is Putative 2-isopropylmalate synthase of Buchnera aphidicola subsp. Baizongia pistaciae (strain Bp).